Reading from the N-terminus, the 526-residue chain is Delayed-rectifier potassium channel regulatory subunit KCNS1 (526 aa).

The Cytoplasmic portion of the chain corresponds to Met-1 to Leu-217. The helical transmembrane segment at Pro-218 to Ile-239 threads the bilayer. The Extracellular segment spans residues His-240–Pro-270. A helical membrane pass occupies residues Val-271–Leu-293. Residues Ala-294–Pro-304 lie on the Cytoplasmic side of the membrane. A helical membrane pass occupies residues Leu-305 to Ala-322. The Extracellular segment spans residues Gly-323–Leu-337. A helical; Voltage-sensor transmembrane segment spans residues Gly-338 to His-358. Over Ser-359 to Tyr-373 the chain is Cytoplasmic. Residues Arg-374 to Tyr-395 form a helical membrane-spanning segment. The Extracellular portion of the chain corresponds to Thr-396 to Ile-408. Residues Pro-409–Thr-420 constitute an intramembrane region (helical). A Selectivity filter motif is present at residues Thr-421–Asp-426. Residues Thr-421–Val-428 lie within the membrane without spanning it. At Pro-429–Lys-435 the chain is on the extracellular side. The chain crosses the membrane as a helical span at residues Leu-436–Tyr-464. Over Arg-465–Tyr-526 the chain is Cytoplasmic. Residues Val-492 to Tyr-526 are disordered. A compositionally biased stretch (polar residues) spans Ser-496 to Gly-507.

This sequence belongs to the potassium channel family. S (TC 1.A.1.2) subfamily. Kv9.1/KCNS1 sub-subfamily. Heterotetramer with KCNB1. Heterotetramer with KCNB2. Does not form homomultimers.

The protein resides in the cell membrane. Its function is as follows. Potassium channel regulatory subunit that modulate the delayed rectifier voltage-gated potassium channel activity of KCNB1 and KCNB2 by altering their kinetics, expression levels, and shifting the half-inactivation potential to more polarized values. While it does not form functional channels on its own, it can form functional heterotetrameric channels with KCNB1 and KCNB2. Each regulatory subunit has unique regulatory properties that can lead to extensive inhibition, significant changes in kinetics, and/or substantial shifts in the voltage dependencies of the inactivation process. The polypeptide is Delayed-rectifier potassium channel regulatory subunit KCNS1 (Gorilla gorilla gorilla (Western lowland gorilla)).